A 295-amino-acid polypeptide reads, in one-letter code: Small ribosomal subunit protein uS2 (295 aa).

Residue Ser2 is modified to N-acetylserine. The residue at position 43 (Ser43) is a Phosphoserine. The residue at position 52 (Lys52) is an N6-acetyllysine. The interval 54-113 (TWEKLLLAARAIVAIENPADVSVISSRNTGQRAVLKFAAATGATPIAGRFTPGTFTNQIQ) is interaction with PPP1R16B. Lys89 is subject to N6-acetyllysine; alternate. Lys89 is covalently cross-linked (Glycyl lysine isopeptide (Lys-Gly) (interchain with G-Cter in SUMO2); alternate). Thr97 carries the phosphothreonine modification. 2 laminin-binding regions span residues 161-180 (IPCNNKGAHSVGLMWWMLAR) and 205-229 (RDPEEIEKEEQAAAEKAVTKEEFQG). [DE]-W-[ST] repeat units follow at residues 230–232 (EWT), 247–249 (DWS), 266–268 (DWS), 275–277 (DWS), and 293–295 (EWS). The interval 242–295 (QPEVADWSEGVQVPSVPIQQFPTEDWSAQPATEDWSAAPTAQATEWVGATTEWS) is laminin-binding. The disordered stretch occupies residues 266–295 (DWSAQPATEDWSAAPTAQATEWVGATTEWS).

Belongs to the universal ribosomal protein uS2 family. As to quaternary structure, monomer (37LRP) and homodimer (67LR). Component of the small ribosomal subunit. Mature ribosomes consist of a small (40S) and a large (60S) subunit. The 40S subunit contains about 33 different proteins and 1 molecule of RNA (18S). The 60S subunit contains about 49 different proteins and 3 molecules of RNA (28S, 5.8S and 5S). Interacts with RPS21. Interacts with several laminins including at least LAMB1. Interacts with MDK. Interacts with PRNP. The mature dimeric form interacts with PPP1R16B (via its fourth ankyrin repeat). Interacts with PPP1CA only in the presence of PPP1R16B. Post-translationally, acylated. Acylation may be a prerequisite for conversion of the monomeric 37 kDa laminin receptor precursor (37LRP) to the mature dimeric 67 kDa laminin receptor (67LR), and may provide a mechanism for membrane association. In terms of processing, cleaved by stromelysin-3 (ST3) at the cell surface. Cleavage by stromelysin-3 may be a mechanism to alter cell-extracellular matrix interactions.

It localises to the cell membrane. Its subcellular location is the cytoplasm. The protein resides in the nucleus. In terms of biological role, required for the assembly and/or stability of the 40S ribosomal subunit. Required for the processing of the 20S rRNA-precursor to mature 18S rRNA in a late step of the maturation of 40S ribosomal subunits. Also functions as a cell surface receptor for laminin. Plays a role in cell adhesion to the basement membrane and in the consequent activation of signaling transduction pathways. May play a role in cell fate determination and tissue morphogenesis. Also acts as a receptor for several other ligands, including the pathogenic prion protein, viruses, and bacteria. Acts as a PPP1R16B-dependent substrate of PPP1CA. Enables malignant tumor cells to penetrate laminin tissue and vessel barriers. Activates precursor thymic anti-OFA/iLRP specific cytotoxic T-cell. May induce CD8 T-suppressor cells secreting IL-10. In Mus musculus (Mouse), this protein is Small ribosomal subunit protein uS2 (Rpsa).